Reading from the N-terminus, the 799-residue chain is MDEDGLELQQQAPNSFFDATGAGATHMDGNQIVVEVQETVYVSDVVDSDITVHNYVPDDPDSVVIQDVIEDVVIEDVQCTDIMDEADVSETVIIPEQVLDSDVTEEVSLTHCTVPDDVLASDITSASISMPEHVLTSESIHVSDVGHVEHVVHDSVVEAEIVTDPLAADVVSEEVLVADCASEAVIDANGIPVNQQDEEKNNCEDYLMISLDDAGKIEHDGSSGLTMDNETEIDPCKVDGTCPEVIKVYIFKADPGEDDLGGTVDIVESEPENEHGVELLDPNNSIRVPREKMVYMAVNDSQQEEEELNVAEIADEVYMEVIVGEEDAAAAAAAAVHEQQVEDNEMKTFMPIAWAAAYGNNSDGIENRNGTASALLHIDESAGLGRLAKQKPKKRRRPDSRQYQTAIIIGPDGHPLTVYPCMICGKKFKSRGFLKRHMKNHPEHLAKKKYRCTDCDYTTNKKISLHNHLESHKLTSKAEKAIECDECGKHFSHAGALFTHKMVHKEKGANKMHKCKFCEYETAEQGLLNRHLLAVHSKNFPHICVECGKGFRHPSELKKHMRIHTGEKPYECQYCEYRSADSSNLKTHVKTKHSKEMPFKCDICLLTFSDTKEVQQHALVHQESKTHQCLHCDHKSSNSSDLKRHIISVHTKDYPHKCDMCDKGFHRPSELKKHVAAHKGKKMHQCRHCDFKIADPFVLSRHILSVHTKDLPFRCKRCRKGFRQQSELKKHMKTHSGRKVYQCEYCEYSTTDASGFKRHVISIHTKDYPHRCEYCKKGFRRPSEKNQHIMRHHKEVGLP.

Ser-269 carries the phosphoserine modification. 13 C2H2-type zinc fingers span residues 419-444 (YPCMICGKKFKSRGFLKRHMKNHPEH), 450-472 (YRCTDCDYTTNKKISLHNHLESH), 482-504 (IECDECGKHFSHAGALFTHKMVH), 513-536 (HKCKFCEYETAEQGLLNRHLLAVH), 542-564 (HICVECGKGFRHPSELKKHMRIH), 570-593 (YECQYCEYRSADSSNLKTHVKTKH), 599-621 (FKCDICLLTFSDTKEVQQHALVH), 627-650 (HQCLHCDHKSSNSSDLKRHIISVH), 656-678 (HKCDMCDKGFHRPSELKKHVAAH), 684-707 (HQCRHCDFKIADPFVLSRHILSVH), 713-735 (FRCKRCRKGFRQQSELKKHMKTH), 741-764 (YQCEYCEYSTTDASGFKRHVISIH), and 770-792 (HRCEYCKKGFRRPSEKNQHIMRH).

This sequence belongs to the krueppel C2H2-type zinc-finger protein family. ZFX/ZFY subfamily.

The protein localises to the nucleus. In terms of biological role, probable transcriptional activator. This chain is Zinc finger X-chromosomal protein (Zfx), found in Mus musculus (Mouse).